Reading from the N-terminus, the 461-residue chain is Photosystem II CP43 reaction center protein (461 aa).

A propeptide spanning residues 1 to 2 (ME) is cleaved from the precursor. Position 3 is an N-acetylthreonine (threonine 3). Threonine 3 bears the Phosphothreonine mark. 5 consecutive transmembrane segments (helical) span residues 57-81 (LFEV…PHLA), 122-143 (IIGP…KDKN), 166-188 (KAMF…RVIS), 243-263 (KPFS…LSYS), and 279-300 (WFNN…ASQA). Glutamate 355 lines the [CaMn4O5] cluster pocket. Residues 435–459 (RARAASGGFEKGLDRENEPVLSMKL) traverse the membrane as a helical segment.

This sequence belongs to the PsbB/PsbC family. PsbC subfamily. PSII is composed of 1 copy each of membrane proteins PsbA, PsbB, PsbC, PsbD, PsbE, PsbF, PsbH, PsbI, PsbJ, PsbK, PsbL, PsbM, PsbT, PsbX, PsbY, PsbZ, Psb30/Ycf12, at least 3 peripheral proteins of the oxygen-evolving complex and a large number of cofactors. It forms dimeric complexes. Requires Binds multiple chlorophylls and provides some of the ligands for the Ca-4Mn-5O cluster of the oxygen-evolving complex. It may also provide a ligand for a Cl- that is required for oxygen evolution. PSII binds additional chlorophylls, carotenoids and specific lipids. as cofactor.

Its subcellular location is the plastid. The protein localises to the cyanelle thylakoid membrane. One of the components of the core complex of photosystem II (PSII). It binds chlorophyll and helps catalyze the primary light-induced photochemical processes of PSII. PSII is a light-driven water:plastoquinone oxidoreductase, using light energy to abstract electrons from H(2)O, generating O(2) and a proton gradient subsequently used for ATP formation. In Cyanophora paradoxa, this protein is Photosystem II CP43 reaction center protein.